The chain runs to 429 residues: Serine--tRNA ligase (429 aa).

234–236 contributes to the L-serine binding site; that stretch reads TSE. ATP contacts are provided by residues 265–267 and Val-281; that span reads RKE. Glu-288 is an L-serine binding site. 352–355 lines the ATP pocket; the sequence is ELVS. An L-serine-binding site is contributed by Thr-389.

The protein belongs to the class-II aminoacyl-tRNA synthetase family. Type-1 seryl-tRNA synthetase subfamily. Homodimer. The tRNA molecule probably binds across the dimer.

The catalysed reaction is tRNA(Ser) + L-serine + ATP = L-seryl-tRNA(Ser) + AMP + diphosphate + H(+). It carries out the reaction tRNA(Sec) + L-serine + ATP = L-seryl-tRNA(Sec) + AMP + diphosphate + H(+). It functions in the pathway aminoacyl-tRNA biosynthesis; selenocysteinyl-tRNA(Sec) biosynthesis; L-seryl-tRNA(Sec) from L-serine and tRNA(Sec): step 1/1. Its function is as follows. Catalyzes the attachment of serine to tRNA(Ser). Is also probably able to aminoacylate tRNA(Sec) with serine, to form the misacylated tRNA L-seryl-tRNA(Sec), which will be further converted into selenocysteinyl-tRNA(Sec). This Encephalitozoon cuniculi (strain GB-M1) (Microsporidian parasite) protein is Serine--tRNA ligase.